We begin with the raw amino-acid sequence, 122 residues long: Double-headed protease inhibitor, submandibular gland (122 aa).

Kazal-like domains lie at 10 to 70 (GGRK…ECDI) and 71 to 121 (ECTQ…QCQS). Disulfide bonds link Cys-16-Cys-50, Cys-28-Cys-47, Cys-36-Cys-68, Cys-72-Cys-101, Cys-79-Cys-98, and Cys-87-Cys-119.

Its subcellular location is the secreted. Its function is as follows. This inhibitor is composed of two homologous actively inhibiting halves: one which inhibits trypsin, the other which inhibits elastase. This Martes martes (European pine marten) protein is Double-headed protease inhibitor, submandibular gland.